The primary structure comprises 175 residues: Peptide deformylase (175 aa).

Fe cation is bound by residues Cys99 and His141. Glu142 is an active-site residue. His145 lines the Fe cation pocket.

The protein belongs to the polypeptide deformylase family. Fe(2+) is required as a cofactor.

It carries out the reaction N-terminal N-formyl-L-methionyl-[peptide] + H2O = N-terminal L-methionyl-[peptide] + formate. Removes the formyl group from the N-terminal Met of newly synthesized proteins. Requires at least a dipeptide for an efficient rate of reaction. N-terminal L-methionine is a prerequisite for activity but the enzyme has broad specificity at other positions. This Rickettsia prowazekii (strain Madrid E) protein is Peptide deformylase.